The primary structure comprises 1106 residues: Carbamoyl phosphate synthase large chain (1106 aa).

Residues 1–402 (MPRRQDLNSV…ALQKAMRSLE (402 aa)) form a carboxyphosphate synthetic domain region. The ATP site is built by Arg-129, Arg-169, Gly-175, Gly-176, Glu-208, Ile-210, Glu-215, Gly-241, Val-242, His-243, Gln-285, and Glu-299. Residues 133 to 328 (KGVVERCGAE…IAKIATKLSL (196 aa)) enclose the ATP-grasp 1 domain. Residues Gln-285, Glu-299, and Asn-301 each coordinate Mg(2+). Mn(2+)-binding residues include Gln-285, Glu-299, and Asn-301. Positions 403 to 550 (QKGSAFSFAR…YHYSSYDRET (148 aa)) are oligomerization domain. The segment at 551–953 (EVAPHEKPSV…AFAKAQAAAG (403 aa)) is carbamoyl phosphate synthetic domain. Residues 681–872 (ARVLTEAGLR…MAKAAALIGT (192 aa)) enclose the ATP-grasp 2 domain. The ATP site is built by Arg-717, Lys-756, Leu-758, Glu-763, Gly-788, Ile-789, His-790, Ser-791, Gln-831, and Glu-843. Mg(2+) is bound by residues Gln-831, Glu-843, and Asn-845. Gln-831, Glu-843, and Asn-845 together coordinate Mn(2+). The MGS-like domain maps to 954 to 1106 (GPLPTSGSLF…ERAAQEASRD (153 aa)). The tract at residues 954 to 1106 (GPLPTSGSLF…ERAAQEASRD (153 aa)) is allosteric domain.

Belongs to the CarB family. Composed of two chains; the small (or glutamine) chain promotes the hydrolysis of glutamine to ammonia, which is used by the large (or ammonia) chain to synthesize carbamoyl phosphate. Tetramer of heterodimers (alpha,beta)4. Mg(2+) serves as cofactor. It depends on Mn(2+) as a cofactor.

The catalysed reaction is hydrogencarbonate + L-glutamine + 2 ATP + H2O = carbamoyl phosphate + L-glutamate + 2 ADP + phosphate + 2 H(+). It catalyses the reaction hydrogencarbonate + NH4(+) + 2 ATP = carbamoyl phosphate + 2 ADP + phosphate + 2 H(+). Its pathway is amino-acid biosynthesis; L-arginine biosynthesis; carbamoyl phosphate from bicarbonate: step 1/1. It participates in pyrimidine metabolism; UMP biosynthesis via de novo pathway; (S)-dihydroorotate from bicarbonate: step 1/3. Functionally, large subunit of the glutamine-dependent carbamoyl phosphate synthetase (CPSase). CPSase catalyzes the formation of carbamoyl phosphate from the ammonia moiety of glutamine, carbonate, and phosphate donated by ATP, constituting the first step of 2 biosynthetic pathways, one leading to arginine and/or urea and the other to pyrimidine nucleotides. The large subunit (synthetase) binds the substrates ammonia (free or transferred from glutamine from the small subunit), hydrogencarbonate and ATP and carries out an ATP-coupled ligase reaction, activating hydrogencarbonate by forming carboxy phosphate which reacts with ammonia to form carbamoyl phosphate. The sequence is that of Carbamoyl phosphate synthase large chain from Kocuria rhizophila (strain ATCC 9341 / DSM 348 / NBRC 103217 / DC2201).